Consider the following 330-residue polypeptide: Delta-aminolevulinic acid dehydratase (330 aa).

Lys-203 (schiff-base intermediate with substrate) is an active-site residue. The 5-aminolevulinate site is built by Arg-213 and Arg-224. Mg(2+) is bound at residue Glu-240. The Schiff-base intermediate with substrate role is filled by Lys-255. 5-aminolevulinate is bound by residues Ser-281 and Tyr-320.

It belongs to the ALAD family. In terms of assembly, homooctamer.

It carries out the reaction 2 5-aminolevulinate = porphobilinogen + 2 H2O + H(+). The protein operates within porphyrin-containing compound metabolism; protoporphyrin-IX biosynthesis; coproporphyrinogen-III from 5-aminolevulinate: step 1/4. Functionally, catalyzes an early step in the biosynthesis of tetrapyrroles. Binds two molecules of 5-aminolevulinate per subunit, each at a distinct site, and catalyzes their condensation to form porphobilinogen. In Streptomyces coelicolor (strain ATCC BAA-471 / A3(2) / M145), this protein is Delta-aminolevulinic acid dehydratase (hemB).